Here is a 39-residue protein sequence, read N- to C-terminus: Conotoxin ArMSGL-013 (39 aa).

A propeptide spanning residues 1–5 (RRSLT) is cleaved from the precursor. Disulfide bonds link Cys-12-Cys-24, Cys-16-Cys-33, and Cys-23-Cys-37. Trp-38 is subject to Tryptophan amide.

This sequence belongs to the conotoxin O3 superfamily. As to expression, expressed by the venom duct.

It localises to the secreted. The protein is Conotoxin ArMSGL-013 of Conus arenatus (Sand-dusted cone).